The primary structure comprises 87 residues: Small ribosomal subunit protein uS17 (87 aa).

The protein belongs to the universal ribosomal protein uS17 family. As to quaternary structure, part of the 30S ribosomal subunit.

Its function is as follows. One of the primary rRNA binding proteins, it binds specifically to the 5'-end of 16S ribosomal RNA. This chain is Small ribosomal subunit protein uS17, found in Oceanobacillus iheyensis (strain DSM 14371 / CIP 107618 / JCM 11309 / KCTC 3954 / HTE831).